The sequence spans 447 residues: Serine/threonine-protein phosphatase 2A 55 kDa regulatory subunit B gamma isoform (447 aa).

WD repeat units lie at residues 22–61 (TEAD…KNAP), 87–128 (EIEE…KRPE), 171–209 (GHTY…RSFN), 220–260 (DLTE…LCDK), 279–317 (EIIS…RPIE), 334–375 (ENDC…DVTL), and 410–446 (DFTK…NSDV).

The protein belongs to the phosphatase 2A regulatory subunit B family. In terms of assembly, PP2A consists of a common heterodimeric core enzyme, composed of a 36 kDa catalytic subunit (subunit C) and a 65 kDa constant regulatory subunit (PR65 or subunit A), that associates with a variety of regulatory subunits. Proteins that associate with the core dimer include three families of regulatory subunits B (the R2/B/PR55/B55, R3/B''/PR72/PR130/PR59 and R5/B'/B56 families), the 48 kDa variable regulatory subunit, viral proteins, and cell signaling molecules. Interacts with IER5. Highly expressed in brain.

In terms of biological role, the B regulatory subunit might modulate substrate selectivity and catalytic activity, and might also direct the localization of the catalytic enzyme to a particular subcellular compartment. The chain is Serine/threonine-protein phosphatase 2A 55 kDa regulatory subunit B gamma isoform (PPP2R2C) from Oryctolagus cuniculus (Rabbit).